Consider the following 142-residue polypeptide: Large ribosomal subunit protein uL13 (142 aa).

The protein belongs to the universal ribosomal protein uL13 family. In terms of assembly, part of the 50S ribosomal subunit.

Its function is as follows. This protein is one of the early assembly proteins of the 50S ribosomal subunit, although it is not seen to bind rRNA by itself. It is important during the early stages of 50S assembly. In Shigella sonnei (strain Ss046), this protein is Large ribosomal subunit protein uL13.